We begin with the raw amino-acid sequence, 368 residues long: MGSPHREAIRTARSVVVKVGTTALTTPSGVFDAGRLAELADAIESRMKAGTDVVIVSSGAIAAGIEPLGLSRRPKDLATKQAAASVGQVALVNSWSAAFARYGRTVGQVLLTAHDIAMRVQHTNAQRTLDRLRALHAVGIVNENDTVATNEIRFGDNDRLSALVAHLVGADALVLLSDIDGLYDADPRKFQNARFIPEVSGPADLDGVVAGQGSHLGTGGMASKMSSALLAADAGVPVLLAPAADAAAALTDASVGTVFAARSERMSARRFWVRYAAESAGSLTLDEGAVRAVVGHRRSLLPAGITAVAGKFFGGDVVDLCGPDATMVARGVVAYDATELAAMMGRSTSELPGELRRPAVHADDLVAV.

Position 18 (Lys-18) interacts with ATP. 3 residues coordinate substrate: Ser-58, Asp-145, and Asn-157. ATP is bound by residues 177–178 and 218–224; these read SD and TGGMASK. A PUA domain is found at 280–358; it reads AGSLTLDEGA…SELPGELRRP (79 aa).

The protein belongs to the glutamate 5-kinase family.

It is found in the cytoplasm. The enzyme catalyses L-glutamate + ATP = L-glutamyl 5-phosphate + ADP. It participates in amino-acid biosynthesis; L-proline biosynthesis; L-glutamate 5-semialdehyde from L-glutamate: step 1/2. Functionally, catalyzes the transfer of a phosphate group to glutamate to form L-glutamate 5-phosphate. This is Glutamate 5-kinase from Mycobacterium ulcerans (strain Agy99).